A 283-amino-acid polypeptide reads, in one-letter code: Phosphatidylserine decarboxylase proenzyme (283 aa).

Active-site charge relay system; for autoendoproteolytic cleavage activity residues include Asp-96, His-152, and Ser-250. Ser-250 (schiff-base intermediate with substrate; via pyruvic acid; for decarboxylase activity) is an active-site residue. Ser-250 is modified (pyruvic acid (Ser); by autocatalysis).

This sequence belongs to the phosphatidylserine decarboxylase family. PSD-B subfamily. Prokaryotic type I sub-subfamily. As to quaternary structure, heterodimer of a large membrane-associated beta subunit and a small pyruvoyl-containing alpha subunit. It depends on pyruvate as a cofactor. In terms of processing, is synthesized initially as an inactive proenzyme. Formation of the active enzyme involves a self-maturation process in which the active site pyruvoyl group is generated from an internal serine residue via an autocatalytic post-translational modification. Two non-identical subunits are generated from the proenzyme in this reaction, and the pyruvate is formed at the N-terminus of the alpha chain, which is derived from the carboxyl end of the proenzyme. The autoendoproteolytic cleavage occurs by a canonical serine protease mechanism, in which the side chain hydroxyl group of the serine supplies its oxygen atom to form the C-terminus of the beta chain, while the remainder of the serine residue undergoes an oxidative deamination to produce ammonia and the pyruvoyl prosthetic group on the alpha chain. During this reaction, the Ser that is part of the protease active site of the proenzyme becomes the pyruvoyl prosthetic group, which constitutes an essential element of the active site of the mature decarboxylase.

The protein resides in the cell membrane. It catalyses the reaction a 1,2-diacyl-sn-glycero-3-phospho-L-serine + H(+) = a 1,2-diacyl-sn-glycero-3-phosphoethanolamine + CO2. Its pathway is phospholipid metabolism; phosphatidylethanolamine biosynthesis; phosphatidylethanolamine from CDP-diacylglycerol: step 2/2. In terms of biological role, catalyzes the formation of phosphatidylethanolamine (PtdEtn) from phosphatidylserine (PtdSer). This is Phosphatidylserine decarboxylase proenzyme from Acinetobacter baumannii (strain SDF).